A 607-amino-acid chain; its full sequence is Elongation factor 4 (607 aa).

Residues 11–193 (EKIRNFSIIA…QIVEKVPAPQ (183 aa)) form the tr-type G domain. GTP-binding positions include 23-28 (DHGKST) and 140-143 (NKID).

The protein belongs to the TRAFAC class translation factor GTPase superfamily. Classic translation factor GTPase family. LepA subfamily.

It is found in the cell membrane. The enzyme catalyses GTP + H2O = GDP + phosphate + H(+). In terms of biological role, required for accurate and efficient protein synthesis under certain stress conditions. May act as a fidelity factor of the translation reaction, by catalyzing a one-codon backward translocation of tRNAs on improperly translocated ribosomes. Back-translocation proceeds from a post-translocation (POST) complex to a pre-translocation (PRE) complex, thus giving elongation factor G a second chance to translocate the tRNAs correctly. Binds to ribosomes in a GTP-dependent manner. This chain is Elongation factor 4, found in Lactococcus lactis subsp. lactis (strain IL1403) (Streptococcus lactis).